The following is a 231-amino-acid chain: Small ribosomal subunit protein uS2c (231 aa).

Belongs to the universal ribosomal protein uS2 family.

It is found in the plastid. The protein resides in the chloroplast. This is Small ribosomal subunit protein uS2c (rps2) from Gracilaria tenuistipitata var. liui (Red alga).